A 32-amino-acid polypeptide reads, in one-letter code: Calcitonin (32 aa).

C1 and C7 form a disulfide bridge. P32 carries the proline amide modification.

The protein belongs to the calcitonin family.

It is found in the secreted. Its function is as follows. Calcitonin is a peptide hormone that causes a rapid but short-lived drop in the level of calcium and phosphate in blood by promoting the incorporation of those ions in the bones. Calcitonin function is mediated by the calcitonin receptor/CALCR and the CALCR-RAMP2 (AMYR2) receptor complex. This chain is Calcitonin (CALCA), found in Bos taurus (Bovine).